The following is a 145-amino-acid chain: Ribosome maturation factor RimP (145 aa).

It belongs to the RimP family.

It is found in the cytoplasm. Functionally, required for maturation of 30S ribosomal subunits. This Borreliella burgdorferi (strain ZS7) (Borrelia burgdorferi) protein is Ribosome maturation factor RimP.